The primary structure comprises 598 residues: MDKINIRNFAIIAHIDHGKSTLADRLIEECNGLEKREMKDQVLDSMDIERERGITIKAQTVRLMYTAKDGKVYYLNLMDTPGHVDFSYEVSRSLAACEGSLLVVDSTQGVEAQTLANVYKAIDSNHEIIPVLNKIDLASSDPDKVKSQIEEIIGIDASESLLVSAKSGIGIKDVLEAIVSRLPAPSGNFDNPLKAILVDTWYDTYLGIVILLRVVDGVIKKGMKIVMMSSNAAYQVDNIGIFTPHKKIVDQLSVGEIGFITASIKELSDCKIGDTITEEQRRCDNPMPGFRTIHPVVFCSIFPNEAGDFERLREALKKLQLNDASFTFDIEVSSALGYGFRCGFLGMLHLEVIQERLEREFNLDLTATAPGVVYQIISKNGILREVHNPHDFGDVQDIASIKEPWICATIMVPDQYLGVVMSLCNNKRGEKVDLSYSGNTALLKYRLPLSEVVFDFYDRIKSISKGYASLDWEMDGYMDSEIAKLTILINSEPVDALACIVHKSKVEQRGREICLRLKDLIPRQQYKIAIQAAVGSKIIARETISPYRKDVTAKLYGGDVTRRMKLLEKQKKGKKRLRAIGNVNVPHNAFIQALKIID.

The 183-residue stretch at 4-186 (INIRNFAIIA…AIVSRLPAPS (183 aa)) folds into the tr-type G domain. GTP contacts are provided by residues 16 to 21 (DHGKST) and 133 to 136 (NKID).

Belongs to the TRAFAC class translation factor GTPase superfamily. Classic translation factor GTPase family. LepA subfamily.

It localises to the cell inner membrane. It carries out the reaction GTP + H2O = GDP + phosphate + H(+). Functionally, required for accurate and efficient protein synthesis under certain stress conditions. May act as a fidelity factor of the translation reaction, by catalyzing a one-codon backward translocation of tRNAs on improperly translocated ribosomes. Back-translocation proceeds from a post-translocation (POST) complex to a pre-translocation (PRE) complex, thus giving elongation factor G a second chance to translocate the tRNAs correctly. Binds to ribosomes in a GTP-dependent manner. This chain is Elongation factor 4, found in Ehrlichia ruminantium (strain Gardel).